The primary structure comprises 76 residues: NADH dehydrogenase [ubiquinone] 1 subunit C1, mitochondrial (76 aa).

A mitochondrion-targeting transit peptide spans 1-27; sequence MAPSALLRPLSRLLAPARLPSGPSVRS. A helical membrane pass occupies residues 41–59; sequence WLKVGFTLGTTVFLWIYLI.

It belongs to the complex I NDUFC1 subunit family. Complex I is composed of 45 different subunits.

The protein localises to the mitochondrion inner membrane. In terms of biological role, accessory subunit of the mitochondrial membrane respiratory chain NADH dehydrogenase (Complex I), that is believed not to be involved in catalysis. Complex I functions in the transfer of electrons from NADH to the respiratory chain. The immediate electron acceptor for the enzyme is believed to be ubiquinone. The sequence is that of NADH dehydrogenase [ubiquinone] 1 subunit C1, mitochondrial (NDUFC1) from Homo sapiens (Human).